A 513-amino-acid chain; its full sequence is MRCLTIYTWTFRRLPFIPSTNSASFFSTLRFNMSTANNTQAIVIGGGLAGLSATNTILDLGGNVLLLDKNTAFGGNSVKAASGINAAPTQLQFDQHVSDSVNTFYNDSILSAKSKAKPELLRTLTSKSSSAVDWLSERFGLQMDQLSRLAGHSEPRTHRGTHPDYPFKPLAFVLVDQTEKFAASHPDRLQIKKNARVTRLLTNPNHDKVFGVEYMDLSDKSNHTVYGPVVLATGGYAADYSDDSLLKLYHPEALSLSTTNGPYCTGDGHKMVMSIGGSTVDLDLVQIHPTGFVDPKDPTALTKFLAAEALRGSGAVLLTSQGRRFCDELGYRDYVTGEMMKLKSPVYLVLNSAAAEEVANFIKFYSFKGLMKKMKAEELCSTLNCTKDELASTFSEYNRAAKGEIPDEFGRKYFGKTPLELTDTFTVGEVVPVLHYTMGGVQVDTQSRVLSTNGNVIDGLFAAGEIVGGIHGENRLGGSSLLACVVFGRLAGQGASSTMLRRFIASSTSTASS.

Position 41 to 55 (alanine 41 to asparagine 55) interacts with FAD. Serine 100 bears the Phosphoserine mark. Catalysis depends on residues histidine 288 and arginine 311.

Belongs to the FAD-dependent oxidoreductase 2 family. FRD/SDH subfamily. The cofactor is FAD.

The protein resides in the cytoplasm. It localises to the mitochondrion. Its subcellular location is the nucleus. It catalyses the reaction succinate + NAD(+) = fumarate + NADH + H(+). Functionally, irreversibly catalyzes the reduction of fumarate to succinate. The sequence is that of Fumarate reductase (osm1) from Schizosaccharomyces pombe (strain 972 / ATCC 24843) (Fission yeast).